A 351-amino-acid polypeptide reads, in one-letter code: Nicotinate-nucleotide--dimethylbenzimidazole phosphoribosyltransferase (351 aa).

The active-site Proton acceptor is E317.

It belongs to the CobT family.

It carries out the reaction 5,6-dimethylbenzimidazole + nicotinate beta-D-ribonucleotide = alpha-ribazole 5'-phosphate + nicotinate + H(+). Its pathway is nucleoside biosynthesis; alpha-ribazole biosynthesis; alpha-ribazole from 5,6-dimethylbenzimidazole: step 1/2. Catalyzes the synthesis of alpha-ribazole-5'-phosphate from nicotinate mononucleotide (NAMN) and 5,6-dimethylbenzimidazole (DMB). The chain is Nicotinate-nucleotide--dimethylbenzimidazole phosphoribosyltransferase from Pseudomonas aeruginosa (strain UCBPP-PA14).